Reading from the N-terminus, the 37-residue chain is Toxin Bcg III 28.78 (37 aa).

A disulfide bridge connects residues Cys-6 and Cys-31.

It localises to the secreted. The protein localises to the nematocyst. The chain is Toxin Bcg III 28.78 from Bunodosoma cangicum (Sea anemone).